The sequence spans 147 residues: Interleukin-4 (147 aa).

A signal peptide spans 1 to 19; the sequence is MGLRPQLAAILLCLLACTG. N-linked (GlcNAc...) asparagine glycans are attached at residues Asn20, Asn61, Asn90, and Asn117. 2 disulfides stabilise this stretch: Cys47–Cys87 and Cys69–Cys114.

Belongs to the IL-4/IL-13 family.

The protein localises to the secreted. In terms of biological role, participates in at least several B-cell activation processes as well as of other cell types. It is a costimulator of DNA-synthesis. It induces the expression of class II MHC molecules on resting B-cells. It enhances both secretion and cell surface expression of IgE and IgG1. It also regulates the expression of the low affinity Fc receptor for IgE (CD23) on both lymphocytes and monocytes. Positively regulates IL31RA expression in macrophages. Stimulates autophagy in dendritic cells by interfering with mTORC1 signaling and through the induction of RUFY4. This chain is Interleukin-4 (IL4), found in Mesocricetus auratus (Golden hamster).